Reading from the N-terminus, the 62-residue chain is Sperm protamine P1 (62 aa).

The tract at residues 1-62 is disordered; it reads MARYRHSRSR…RYSRRRRRRY (62 aa).

Belongs to the protamine P1 family. In terms of tissue distribution, testis.

It localises to the nucleus. The protein resides in the chromosome. Protamines substitute for histones in the chromatin of sperm during the haploid phase of spermatogenesis. They compact sperm DNA into a highly condensed, stable and inactive complex. The polypeptide is Sperm protamine P1 (PRM1) (Lagostrophus fasciatus (Banded hare-wallaby)).